Reading from the N-terminus, the 428-residue chain is Putative F-box protein At3g22421 (428 aa).

The F-box domain occupies threonine 4–glutamate 50.

The chain is Putative F-box protein At3g22421 from Arabidopsis thaliana (Mouse-ear cress).